We begin with the raw amino-acid sequence, 158 residues long: Transcription elongation factor GreA (158 aa).

This sequence belongs to the GreA/GreB family.

Functionally, necessary for efficient RNA polymerase transcription elongation past template-encoded arresting sites. The arresting sites in DNA have the property of trapping a certain fraction of elongating RNA polymerases that pass through, resulting in locked ternary complexes. Cleavage of the nascent transcript by cleavage factors such as GreA or GreB allows the resumption of elongation from the new 3'terminus. GreA releases sequences of 2 to 3 nucleotides. This chain is Transcription elongation factor GreA, found in Verminephrobacter eiseniae (strain EF01-2).